A 286-amino-acid polypeptide reads, in one-letter code: Small ribosomal subunit protein uS15m (286 aa).

Residues 1-33 (MSIVGRNAILNLRISLCPLFMGKRSFVSSPVSN) constitute a mitochondrion transit peptide.

The protein belongs to the universal ribosomal protein uS15 family. As to quaternary structure, component of the mitochondrial small ribosomal subunit (mt-SSU). Mature yeast 74S mitochondrial ribosomes consist of a small (37S) and a large (54S) subunit. The 37S small subunit contains a 15S ribosomal RNA (15S mt-rRNA) and 34 different proteins. The 54S large subunit contains a 21S rRNA (21S mt-rRNA) and 46 different proteins. The precursor is processed in two steps involving mitochondrial intermediate peptidase (MIP) and mitochondrial processing peptidase (MPP).

Its subcellular location is the mitochondrion. Component of the mitochondrial ribosome (mitoribosome), a dedicated translation machinery responsible for the synthesis of mitochondrial genome-encoded proteins, including at least some of the essential transmembrane subunits of the mitochondrial respiratory chain. The mitoribosomes are attached to the mitochondrial inner membrane and translation products are cotranslationally integrated into the membrane. The protein is Small ribosomal subunit protein uS15m (MRPS28) of Saccharomyces cerevisiae (strain ATCC 204508 / S288c) (Baker's yeast).